Reading from the N-terminus, the 96-residue chain is Protein FPV129 (96 aa).

2 consecutive transmembrane segments (helical) span residues 36 to 56 (IILD…FVII) and 71 to 91 (LFLL…LYIV).

It belongs to the chordopoxvirinae L2 family.

The protein resides in the virion membrane. The protein localises to the host cytoplasm. Its function is as follows. Early protein involved in early virion morphogenesis. Participates in the formation and elongation of crescent-shaped membrane precursors of immature virions in cytoplasmic factories. The protein is Protein FPV129 of Vertebrata (FPV).